Reading from the N-terminus, the 249-residue chain is tRNA pseudouridine synthase A (249 aa).

Catalysis depends on D52, which acts as the Nucleophile. Y110 provides a ligand contact to substrate.

This sequence belongs to the tRNA pseudouridine synthase TruA family. Homodimer.

The enzyme catalyses uridine(38/39/40) in tRNA = pseudouridine(38/39/40) in tRNA. Its function is as follows. Formation of pseudouridine at positions 38, 39 and 40 in the anticodon stem and loop of transfer RNAs. The chain is tRNA pseudouridine synthase A from Azobacteroides pseudotrichonymphae genomovar. CFP2.